The chain runs to 321 residues: L-carnitine dehydrogenase (321 aa).

14–19 (GSGVIG) contacts NAD(+).

It belongs to the 3-hydroxyacyl-CoA dehydrogenase family. L-carnitine dehydrogenase subfamily. As to quaternary structure, homodimer.

It is found in the cytoplasm. The catalysed reaction is carnitine + NAD(+) = 3-dehydrocarnitine + NADH + H(+). Its pathway is amine and polyamine metabolism; carnitine metabolism. In terms of biological role, catalyzes the NAD(+)-dependent oxidation of L-carnitine to 3-dehydrocarnitine. In Pseudomonas putida (strain ATCC 47054 / DSM 6125 / CFBP 8728 / NCIMB 11950 / KT2440), this protein is L-carnitine dehydrogenase.